We begin with the raw amino-acid sequence, 471 residues long: V-type ATP synthase beta chain (471 aa).

The protein belongs to the ATPase alpha/beta chains family.

Produces ATP from ADP in the presence of a proton gradient across the membrane. The V-type beta chain is a regulatory subunit. This chain is V-type ATP synthase beta chain (atpB), found in Deinococcus radiodurans (strain ATCC 13939 / DSM 20539 / JCM 16871 / CCUG 27074 / LMG 4051 / NBRC 15346 / NCIMB 9279 / VKM B-1422 / R1).